We begin with the raw amino-acid sequence, 35 residues long: Cupiennin-1d (35 aa).

Residue glutamate 35 is modified to Glutamic acid 1-amide.

The protein belongs to the cationic peptide 04 (cupiennin) family. 01 subfamily. In terms of tissue distribution, expressed by the venom gland.

The protein resides in the secreted. Its function is as follows. Has antimicrobial activity against B.subtilis, E.coli, E.faecalis, P.aeruginosa, and S.aureus. Has insecticidal and hemolytic activities. Probably acts by disturbing membrane function with its amphipathic structure. This is Cupiennin-1d from Cupiennius salei (American wandering spider).